The primary structure comprises 1341 residues: DNA-directed RNA polymerase subunit beta (1341 aa).

The protein belongs to the RNA polymerase beta chain family. In terms of assembly, the RNAP catalytic core consists of 2 alpha, 1 beta, 1 beta' and 1 omega subunit. When a sigma factor is associated with the core the holoenzyme is formed, which can initiate transcription.

It catalyses the reaction RNA(n) + a ribonucleoside 5'-triphosphate = RNA(n+1) + diphosphate. Functionally, DNA-dependent RNA polymerase catalyzes the transcription of DNA into RNA using the four ribonucleoside triphosphates as substrates. The chain is DNA-directed RNA polymerase subunit beta from Pseudoalteromonas translucida (strain TAC 125).